Here is an 831-residue protein sequence, read N- to C-terminus: Translation initiation factor IF-2 (831 aa).

The tr-type G domain maps to 329–499 (TRAPVVTVMG…LLIAEMQDLK (171 aa)). Positions 338 to 345 (GHVDHGKT) are G1. Position 338–345 (338–345 (GHVDHGKT)) interacts with GTP. The segment at 363–367 (GITQH) is G2. The interval 385–388 (DTPG) is G3. Residues 385-389 (DTPGH) and 439-442 (NKID) contribute to the GTP site. The G4 stretch occupies residues 439–442 (NKID). Residues 475 to 477 (SAL) are G5.

This sequence belongs to the TRAFAC class translation factor GTPase superfamily. Classic translation factor GTPase family. IF-2 subfamily.

It is found in the cytoplasm. Its function is as follows. One of the essential components for the initiation of protein synthesis. Protects formylmethionyl-tRNA from spontaneous hydrolysis and promotes its binding to the 30S ribosomal subunits. Also involved in the hydrolysis of GTP during the formation of the 70S ribosomal complex. This chain is Translation initiation factor IF-2, found in Rickettsia massiliae (strain Mtu5).